Reading from the N-terminus, the 973-residue chain is GATOR2 complex protein WDR59 (973 aa).

WD repeat units follow at residues 57 to 98, 103 to 143, 146 to 185, 189 to 229, 232 to 276, and 280 to 324; these read QSKW…GEVC, GHTR…KPTV, SAVAGASQVKWNKKNANCLATSHDGDVRIWDKRKPSTAVE, AHLS…KYLN, PCQV…TPVH, and GHDD…QRLC. Residues 346–365 are disordered; the sequence is DKALQPQDSEPQHSSGHGDE. The span at 351 to 360 shows a compositional bias: polar residues; the sequence is PQDSEPQHSS. The 102-residue stretch at 393–494 folds into the RWD domain; that stretch reads QEFSLINVQI…RQLVSWLESV (102 aa). A C4-type zinc finger spans residues 900–920; that stretch reads YCSHCRSEARGTQCAICKGFT. Zn(2+) is bound by residues Cys-901, Cys-904, Cys-913, Cys-916, Cys-926, Cys-937, His-942, His-945, His-948, Cys-959, Cys-963, Cys-965, and Cys-967. The RING-type; atypical zinc finger occupies 921–970; that stretch reads FQCAICHVAVRGSSNFCLTCGHGGHTSHMMEWFRTQEVCPTGCGCHCLLE.

Belongs to the WD repeat WDR59 family. As to quaternary structure, component of the GATOR2 subcomplex, composed of MIOS, SEC13, SEH1L, WDR24 and WDR59. The GATOR2 complex interacts with CASTOR1 and CASTOR2; the interaction is negatively regulated by arginine. The GATOR2 complex interacts with SESN1, SESN2 and SESN3; the interaction is negatively regulated by amino acids. Interacts with DDB1-CUL4A/B E3 ligase complexes.

It localises to the lysosome membrane. The GATOR2 complex is negatively regulated by the upstream amino acid sensors CASTOR1 and SESN2, which sequester the GATOR2 complex in absence of amino acids. In the presence of abundant amino acids, GATOR2 is released from CASTOR1 and SESN2 and activated. Functionally, as a component of the GATOR2 complex, functions as an activator of the amino acid-sensing branch of the mTORC1 signaling pathway. The GATOR2 complex indirectly activates mTORC1 through the inhibition of the GATOR1 subcomplex. GATOR2 probably acts as an E3 ubiquitin-protein ligase toward GATOR1. In the presence of abundant amino acids, the GATOR2 complex mediates ubiquitination of the NPRL2 core component of the GATOR1 complex, leading to GATOR1 inactivation. In the absence of amino acids, GATOR2 is inhibited, activating the GATOR1 complex. This is GATOR2 complex protein WDR59 from Gallus gallus (Chicken).